Here is a 352-residue protein sequence, read N- to C-terminus: MDYQVSSPTYDIDYYTSEPCQKINVKQIAARLLPPLYSLVFIFGFVGNILVVLILINCKRLKSMTDIYLLNLAISDLLFLLTVPFWAHYAAAQWDFGNTMCQLLTGLYFIGFFSGIFFIILLTIDRYLAIVHAVFALKARTVTFGVVTSVITWVVAVFASLPGIIFTRSQREGLHYTCSSHFPYSQYQFWKNFQTLKIVILGLVLPLLVMVICYSGILKTLLRCRNEKKRHRAVRLIFTIMIVYFLFWAPYNIVLLLNTFQEFFGLNNCSSSNRLDQAMQVTETLGMTHCCINPIIYAFVGEKFRNYLLVFFQKHIAKRFCKCCSIFQQEAPERASSVYTRSTGEQEISVGL.

Topologically, residues M1–A30 are extracellular. Residue Y3 is modified to Sulfotyrosine. O-linked (GalNAc...) serine glycosylation is found at S6 and S7. Residues Y10, Y14, and Y15 each carry the sulfotyrosine modification. 2 disulfides stabilise this stretch: C20–C269 and C101–C178. Residues R31–C58 form a helical membrane-spanning segment. The Cytoplasmic portion of the chain corresponds to K59–Y68. Residues L69–Y89 traverse the membrane as a helical segment. The Extracellular portion of the chain corresponds to A90–Q102. The chain crosses the membrane as a helical span at residues L103–I124. Over D125–T141 the chain is Cytoplasmic. The helical transmembrane segment at V142–F166 threads the bilayer. Topologically, residues T167–I198 are extracellular. Residues V199–L218 traverse the membrane as a helical segment. The Cytoplasmic segment spans residues K219 to R235. Residues L236–F260 traverse the membrane as a helical segment. At Q261 to Q277 the chain is on the extracellular side. A helical transmembrane segment spans residues A278 to G301. The Cytoplasmic portion of the chain corresponds to E302 to L352. Residues C321, C323, and C324 are each lipidated (S-palmitoyl cysteine). 4 positions are modified to phosphoserine; by BARK1: S336, S337, S342, and S349.

The protein belongs to the G-protein coupled receptor 1 family. Interacts with PRAF2. Efficient ligand binding to CCL3/MIP-1alpha and CCL4/MIP-1beta requires sulfation, O-glycosylation and sialic acid modifications. Glycosylation on Ser-6 is required for efficient binding of CCL4. Interacts with GRK2. Interacts with ARRB1 and ARRB2. Interacts with CNIH4. Interacts with S100A4; this interaction stimulates T-lymphocyte chemotaxis. Sulfated on at least 2 of the N-terminal tyrosines. Sulfation is required for efficient binding of the chemokines, CCL3 and CCL4. In terms of processing, palmitoylation in the C-terminal is important for cell surface expression. Post-translationally, phosphorylation on serine residues in the C-terminal is stimulated by binding CC chemokines especially by APO-RANTES. O-glycosylated, but not N-glycosylated. Ser-6 appears to be the major site even if Ser-7 may be also O-glycosylated. Also sialylated glycans present which contribute to chemokine binding. Thr-16 and Ser-17 may also be glycosylated and, if so, with small moieties such as a T-antigen.

Its subcellular location is the cell membrane. Functionally, receptor for a number of inflammatory CC-chemokines including CCL3/MIP-1-alpha, CCL4/MIP-1-beta and RANTES and subsequently transduces a signal by increasing the intracellular calcium ion level. May play a role in the control of granulocytic lineage proliferation or differentiation. Participates in T-lymphocyte migration to the infection site by acting as a chemotactic receptor. This is C-C chemokine receptor type 5 (CCR5) from Papio anubis (Olive baboon).